The primary structure comprises 869 residues: 1-phosphatidylinositol 4,5-bisphosphate phosphodiesterase 1 (869 aa).

The EF-hand domain occupies 269–304 (VSTGQLLEFFQLADINHNGLLNYFEFEKFIKILKNR). Residues aspartate 282, asparagine 284, asparagine 286, and glutamate 293 each coordinate Ca(2+). In terms of domain architecture, PI-PLC X-box spans 382–520 (YSKPLNHYFI…LKHKILLKSK (139 aa)). Residues histidine 395 and histidine 439 contribute to the active site. 2 residues coordinate substrate: lysine 518 and lysine 520. Positions 546–571 (ANEQELRMKDDSTNSSSATNSSSMQR) are disordered. Positions 558–568 (TNSSSATNSSS) are enriched in low complexity. One can recognise a PI-PLC Y-box domain in the interval 590–709 (ISGIHGIKFR…SGYVLKPKKL (120 aa)). Positions 614 and 643 each coordinate substrate. Residues 713-862 (VTKAKMIPLI…EGEQYIFCTL (150 aa)) enclose the C2 domain.

Interacts with SGD1. The cofactor is Ca(2+).

The enzyme catalyses a 1,2-diacyl-sn-glycero-3-phospho-(1D-myo-inositol-4,5-bisphosphate) + H2O = 1D-myo-inositol 1,4,5-trisphosphate + a 1,2-diacyl-sn-glycerol + H(+). Functionally, the production of the second messenger molecules diacylglycerol (DAG) and inositol 1,4,5-trisphosphate (IP3) is mediated by activated phosphatidylinositol-specific phospholipase C enzymes. Required for cell growth, osmoresistance and expression of GPD1. This Saccharomyces cerevisiae (strain ATCC 204508 / S288c) (Baker's yeast) protein is 1-phosphatidylinositol 4,5-bisphosphate phosphodiesterase 1 (PLC1).